A 436-amino-acid polypeptide reads, in one-letter code: Suppressor of cytokine signaling 4 (436 aa).

The tract at residues 1–25 (MAENNSKNVDVRPKTSRSRSADRKD) is disordered. Positions 9 to 25 (VDVRPKTSRSRSADRKD) are enriched in basic and acidic residues. An SH2 domain is found at 283–378 (CYWGVMDKYA…FFEPLLSTPL (96 aa)). Residues 373–422 (LLSTPLIRTFPFSLQHICRTVICNCTTYDGIDALPIPSPMKLYLKEYHYK) enclose the SOCS box domain.

It participates in protein modification; protein ubiquitination. Functionally, SOCS family proteins form part of a classical negative feedback system that regulates cytokine signal transduction. Substrate-recognition component of a SCF-like ECS (Elongin BC-CUL2/5-SOCS-box protein) E3 ubiquitin-protein ligase complex which mediates the ubiquitination and subsequent proteasomal degradation of target proteins. Inhibits EGF signaling by mediating the degradation of the Tyr-phosphorylated EGF receptor/EGFR. The polypeptide is Suppressor of cytokine signaling 4 (Socs4) (Mus musculus (Mouse)).